A 163-amino-acid polypeptide reads, in one-letter code: MSNLNLATLDISEHANLPTSSEVLFKAKADKKLSFESIAAAIGRNEVATAAIFYGQAKASEEDIAKLAQVLEIDHAHLESLLSGFPDRGKSVSFPPKDPLIYRLYEIVQNYGYAYKAVMNEKFGDGIMSAISFSTTVEKETDKDGNNWAVVTWRGKWLPYSRF.

Residues R103, E106, and S129 contribute to the active site.

The protein belongs to the cyanase family.

It carries out the reaction cyanate + hydrogencarbonate + 3 H(+) = NH4(+) + 2 CO2. Its function is as follows. Catalyzes the reaction of cyanate with bicarbonate to produce ammonia and carbon dioxide. This chain is Cyanate hydratase, found in Ajellomyces dermatitidis (strain ER-3 / ATCC MYA-2586) (Blastomyces dermatitidis).